The primary structure comprises 147 residues: Shadow of prion protein (147 aa).

Positions Met-1 to Ala-24 are cleaved as a signal peptide. Gly residues predominate over residues Gly-26–Arg-43. The interval Gly-26 to Ser-46 is disordered. Asn-107 carries N-linked (GlcNAc...) asparagine glycosylation. Gly-122 is lipidated: GPI-anchor amidated glycine. Residues Ser-123 to Pro-147 constitute a propeptide, removed in mature form.

Belongs to the SPRN family. In terms of processing, N-glycosylated. Almost exclusively expressed in brain, with weak expression in lung and stomach.

It localises to the cell membrane. Its function is as follows. Prion-like protein that has PrP(C)-like neuroprotective activity. May act as a modulator for the biological actions of normal and abnormal PrP. The chain is Shadow of prion protein (Sprn) from Rattus norvegicus (Rat).